A 617-amino-acid chain; its full sequence is Phosphomethylpyrimidine synthase (617 aa).

Substrate is bound by residues N230, M259, Y288, H324, 344-346, 385-388, and E424; these read SRG and DGLR. H428 contributes to the Zn(2+) binding site. A substrate-binding site is contributed by Y451. H492 serves as a coordination point for Zn(2+). C572, C575, and C580 together coordinate [4Fe-4S] cluster.

This sequence belongs to the ThiC family. Homodimer. It depends on [4Fe-4S] cluster as a cofactor.

It carries out the reaction 5-amino-1-(5-phospho-beta-D-ribosyl)imidazole + S-adenosyl-L-methionine = 4-amino-2-methyl-5-(phosphooxymethyl)pyrimidine + CO + 5'-deoxyadenosine + formate + L-methionine + 3 H(+). It functions in the pathway cofactor biosynthesis; thiamine diphosphate biosynthesis. Its function is as follows. Catalyzes the synthesis of the hydroxymethylpyrimidine phosphate (HMP-P) moiety of thiamine from aminoimidazole ribotide (AIR) in a radical S-adenosyl-L-methionine (SAM)-dependent reaction. The chain is Phosphomethylpyrimidine synthase from Paracidovorax citrulli (strain AAC00-1) (Acidovorax citrulli).